The primary structure comprises 575 residues: Arginine--tRNA ligase (575 aa).

The 'HIGH' region signature appears at 136–146; it reads ANPTGPLHVGH.

This sequence belongs to the class-I aminoacyl-tRNA synthetase family. As to quaternary structure, monomer.

It localises to the cytoplasm. It carries out the reaction tRNA(Arg) + L-arginine + ATP = L-arginyl-tRNA(Arg) + AMP + diphosphate. This Polynucleobacter necessarius subsp. necessarius (strain STIR1) protein is Arginine--tRNA ligase.